The chain runs to 227 residues: Phosphoribosylformylglycinamidine synthase subunit PurQ (227 aa).

Positions 3–225 (FAVIVFPGSN…LKQWRETYVV (223 aa)) constitute a Glutamine amidotransferase type-1 domain. Catalysis depends on cysteine 86, which acts as the Nucleophile. Active-site residues include histidine 194 and glutamate 196.

As to quaternary structure, part of the FGAM synthase complex composed of 1 PurL, 1 PurQ and 2 PurS subunits.

It localises to the cytoplasm. It carries out the reaction N(2)-formyl-N(1)-(5-phospho-beta-D-ribosyl)glycinamide + L-glutamine + ATP + H2O = 2-formamido-N(1)-(5-O-phospho-beta-D-ribosyl)acetamidine + L-glutamate + ADP + phosphate + H(+). The enzyme catalyses L-glutamine + H2O = L-glutamate + NH4(+). The protein operates within purine metabolism; IMP biosynthesis via de novo pathway; 5-amino-1-(5-phospho-D-ribosyl)imidazole from N(2)-formyl-N(1)-(5-phospho-D-ribosyl)glycinamide: step 1/2. Functionally, part of the phosphoribosylformylglycinamidine synthase complex involved in the purines biosynthetic pathway. Catalyzes the ATP-dependent conversion of formylglycinamide ribonucleotide (FGAR) and glutamine to yield formylglycinamidine ribonucleotide (FGAM) and glutamate. The FGAM synthase complex is composed of three subunits. PurQ produces an ammonia molecule by converting glutamine to glutamate. PurL transfers the ammonia molecule to FGAR to form FGAM in an ATP-dependent manner. PurS interacts with PurQ and PurL and is thought to assist in the transfer of the ammonia molecule from PurQ to PurL. The chain is Phosphoribosylformylglycinamidine synthase subunit PurQ from Bacillus mycoides (strain KBAB4) (Bacillus weihenstephanensis).